The following is a 199-amino-acid chain: Probable GTP-binding protein EngB (199 aa).

Residues 28-199 (DLPEIALAGR…DSWDAILEQV (172 aa)) form the EngB-type G domain. GTP is bound by residues 36-43 (GRSNVGKS), 63-67 (GKTQL), 81-84 (DVPG), 148-151 (TKAD), and 180-182 (FSS). 2 residues coordinate Mg(2+): serine 43 and threonine 65.

It belongs to the TRAFAC class TrmE-Era-EngA-EngB-Septin-like GTPase superfamily. EngB GTPase family. Requires Mg(2+) as cofactor.

Its function is as follows. Necessary for normal cell division and for the maintenance of normal septation. This Streptococcus pyogenes serotype M49 (strain NZ131) protein is Probable GTP-binding protein EngB.